A 488-amino-acid polypeptide reads, in one-letter code: E3 ubiquitin-protein ligase TRIM39 (488 aa).

Residues Cys29–Arg70 form an RING-type zinc finger. The B box-type zinc-finger motif lies at Arg102 to Met143. 4 residues coordinate Zn(2+): Cys107, His110, Cys129, and His135. A coiled-coil region spans residues Glu181–Lys250. 2 interaction with CDKN1A regions span residues Lys268–Ala307 and Thr359–Glu488. Positions Ser289–Pro484 constitute a B30.2/SPRY domain.

It belongs to the TRIM/RBCC family. In terms of assembly, interacts with MOAP1. Interacts with CDKN1A. Autoubiquitinated.

Its subcellular location is the cytoplasm. It localises to the cytosol. The protein resides in the mitochondrion. It is found in the nucleus. It carries out the reaction S-ubiquitinyl-[E2 ubiquitin-conjugating enzyme]-L-cysteine + [acceptor protein]-L-lysine = [E2 ubiquitin-conjugating enzyme]-L-cysteine + N(6)-ubiquitinyl-[acceptor protein]-L-lysine.. The protein operates within protein modification; protein ubiquitination. Functionally, E3 ubiquitin-protein ligase. May facilitate apoptosis by inhibiting APC/C-Cdh1-mediated poly-ubiquitination and subsequent proteasome-mediated degradation of the pro-apoptotic protein MOAP1. Regulates the G1/S transition of the cell cycle and DNA damage-induced G2 arrest by stabilizing CDKN1A/p21. Positively regulates CDKN1A/p21 stability by competing with DTL for CDKN1A/p21 binding, therefore disrupting DCX(DTL) E3 ubiquitin ligase complex-mediated CDKN1A/p21 ubiquitination and degradation. This chain is E3 ubiquitin-protein ligase TRIM39 (Trim39), found in Rattus norvegicus (Rat).